The following is a 498-amino-acid chain: ATP synthase subunit beta, chloroplastic (498 aa).

Residue 172-179 (GGAGVGKT) participates in ATP binding.

Belongs to the ATPase alpha/beta chains family. As to quaternary structure, F-type ATPases have 2 components, CF(1) - the catalytic core - and CF(0) - the membrane proton channel. CF(1) has five subunits: alpha(3), beta(3), gamma(1), delta(1), epsilon(1). CF(0) has four main subunits: a(1), b(1), b'(1) and c(9-12).

The protein resides in the plastid. It localises to the chloroplast thylakoid membrane. It catalyses the reaction ATP + H2O + 4 H(+)(in) = ADP + phosphate + 5 H(+)(out). In terms of biological role, produces ATP from ADP in the presence of a proton gradient across the membrane. The catalytic sites are hosted primarily by the beta subunits. This Agapanthus africanus (Lily of the Nile) protein is ATP synthase subunit beta, chloroplastic.